Consider the following 137-residue polypeptide: Large ribosomal subunit protein uL16 (137 aa).

Positions 1-16 are enriched in basic residues; that stretch reads MLQPKRTKFRKMQKGR. A disordered region spans residues 1–22; sequence MLQPKRTKFRKMQKGRIRGEAK.

It belongs to the universal ribosomal protein uL16 family. In terms of assembly, part of the 50S ribosomal subunit.

In terms of biological role, binds 23S rRNA and is also seen to make contacts with the A and possibly P site tRNAs. The chain is Large ribosomal subunit protein uL16 from Jannaschia sp. (strain CCS1).